Consider the following 64-residue polypeptide: Beta-defensin 2 (64 aa).

The first 22 residues, 1 to 22 (MRLHHLLLVLFFVVLSAGSGFT), serve as a signal peptide directing secretion. 3 cysteine pairs are disulfide-bonded: cysteine 31–cysteine 60, cysteine 38–cysteine 53, and cysteine 43–cysteine 61.

It belongs to the beta-defensin family.

It is found in the secreted. In terms of biological role, has bactericidal activity. The protein is Beta-defensin 2 (DEFB2) of Ovis aries (Sheep).